Reading from the N-terminus, the 687-residue chain is MLLTAFYVVLGSFAAPCQQDGDHIVTCQVNKCETVGLFEICTECKTGGVPVDGFCRPFGSIQAAAAGCTKADGTALDKTATTCGKCGDGYFLFMGGCYKTESQPGSEICTTASNGLCTACKVDSQYIFQNKATPSEKGSECILCWDTTDRNGVMGVANCATCTAPASSTGPATCTECMAGTYKKSDTECAACHSDCATCSGEANNQCTSCETGKYLKSNQCVEKNTCNTNHYPDDTSMTCVACTVLDANCATCSFDSATAKGKCLTCNSNKIPRTTLDGTSTCVENSYAGCQGADNELFMKEDQSACLLCGDTKEASNDKGVANCRTCTKNANDSPPTCTACLDGYFLERGSCTTTCADNCATCSEATTEDKCKICKAGFFLASPGEGKCISCSDTNNGGIDGCAECTKEPAGPLKCTKCKPNRKPAGTSDNYTCTEKTCEDPTVCGGTSGACDAIVIDANGKEHYYCSYCGETNKFPIDGLCTDNKGTNAGCTDHTCSYCAAGFFLYMGGCYKIDTVPGSYMCSKSTTAGVCDTPNANNRFFVVPKAISAEQSVLACGNPLGTIAGGNAYVGVEGCSQCTAPDARADGGMAVATCTACEDGKKPGKSGTGCVACPDANCKSCTMDDVCEECADGFSLDNGKCVSSGTNKSGLSTGAIAGISVAAIVVVGGLVGFLCWWFICRGKAQ.

An N-terminal signal peptide occupies residues 1-14 (MLLTAFYVVLGSFA). Over 15-660 (APCQQDGDHI…SGLSTGAIAG (646 aa)) the chain is Extracellular. Residues 661 to 681 (ISVAAIVVVGGLVGFLCWWFI) traverse the membrane as a helical segment. The Cytoplasmic portion of the chain corresponds to 682 to 687 (CRGKAQ).

Belongs to the Giardia variant surface protein family. In terms of processing, O-glycosylated. The major glycan is a trisaccharide with Glc at the reducing terminus. Post-translationally, palmitoylated.

It localises to the cell membrane. This Giardia intestinalis (Giardia lamblia) protein is Variant-specific surface protein VSP4A1.